The chain runs to 495 residues: Heat stress transcription factor A-1a (495 aa).

A DNA-binding region spans residues 50–144 (PPPFLSKTYD…LLKKISRRKS (95 aa)). Positions 140-164 (SRRKSVQGHGSSSSNPQSQQLSQGQ) are disordered. Residues 146 to 164 (QGHGSSSSNPQSQQLSQGQ) are compositionally biased toward low complexity. The segment at 172–238 (SCVEVGKFGL…QIMSFLAKAV (67 aa)) is hydrophobic repeat HR-A/B. The segment at 255 to 288 (NMHVTEANKKRRLREDSTAATESNSHSHSLEASD) is disordered. The short motif at 262–268 (NKKRRLR) is the Nuclear localization signal element. Polar residues predominate over residues 272–281 (TAATESNSHS). Residues 433-442 (FEFLEEYMPE) carry the AHA motif. Positions 445-477 (VFGDATTLENNNNNNNNNNNNNNNNNNNNTNGR) are disordered. Low complexity predominate over residues 454–473 (NNNNNNNNNNNNNNNNNNNN). Residues 482–489 (LIEELGLL) carry the Nuclear export signal motif.

The protein belongs to the HSF family. Class A subfamily. As to quaternary structure, homotrimer. Interacts with HSP70-1 and HSP70-4. Binds to CRK1. Binds to HSBP. In terms of processing, exhibits temperature-dependent phosphorylation. Phosphorylated by CRK1. Constitutively expressed.

It localises to the cytoplasm. The protein resides in the nucleus. Functionally, transcriptional activator that specifically binds DNA sequence 5'-AGAAnnTTCT-3' known as heat shock promoter elements (HSE). The sequence is that of Heat stress transcription factor A-1a (HSFA1A) from Arabidopsis thaliana (Mouse-ear cress).